The sequence spans 550 residues: Major fimbrium tip subunit FimE (550 aa).

An N-terminal signal peptide occupies residues 1 to 21 (MKSKSIIAQLLYVLIAFMAVS). A lipid anchor (N-palmitoyl cysteine) is attached at Cys22. Residue Cys22 is the site of S-diacylglycerol cysteine attachment. A propeptide spanning residues 22-51 (CVADKSEPCPSGEPTRVSGSIVSLEHHGLR) is cleaved from the precursor.

The protein belongs to the FimE family. In terms of assembly, fimbriae are composed of a major, structural subunit and the minor components FimC, FimD and FimE. Identified in a complex composed of FimC, FimD and FimE (in vitro). Does not directly interact with host proteins, but only as a complex with FimC and FimD.

The protein resides in the fimbrium. It localises to the cell outer membrane. Probably a component of the fimbrium tip; required for incorporation of FimC and FimD into fimbriae. These long, filamentous pili are attached to the cell surface; they mediate biofilm formation, adhesion onto host cells and onto other bacteria that are part of the oral microbiome. They play an important role in invasion of periodontal tissues and are major virulence factors. FimC, FimD and FimE contribute to interaction with host CXCR4 and thereby down-regulate the TLR2-mediated host immune response. This Porphyromonas gingivalis (strain ATCC 33277 / DSM 20709 / CIP 103683 / JCM 12257 / NCTC 11834 / 2561) protein is Major fimbrium tip subunit FimE.